Reading from the N-terminus, the 366-residue chain is Cobalt-precorrin-5B C(1)-methyltransferase (366 aa).

Belongs to the CbiD family.

The enzyme catalyses Co-precorrin-5B + S-adenosyl-L-methionine = Co-precorrin-6A + S-adenosyl-L-homocysteine. It functions in the pathway cofactor biosynthesis; adenosylcobalamin biosynthesis; cob(II)yrinate a,c-diamide from sirohydrochlorin (anaerobic route): step 6/10. Its function is as follows. Catalyzes the methylation of C-1 in cobalt-precorrin-5B to form cobalt-precorrin-6A. The polypeptide is Cobalt-precorrin-5B C(1)-methyltransferase (Methanococcus maripaludis (strain C7 / ATCC BAA-1331)).